Here is a 306-residue protein sequence, read N- to C-terminus: D-alanine--D-alanine ligase (306 aa).

Residues 107-300 (KEAYRAAGLP…FGQLCAWMVE (194 aa)) form the ATP-grasp domain. 134-184 (MQPPYVVKPYNEGSSVGVYIVTEAANGPPVLAPDLPATLMVEEYVPGRELS) contributes to the ATP binding site. 3 residues coordinate Mg(2+): Asp-251, Glu-267, and Asn-269.

Belongs to the D-alanine--D-alanine ligase family. Mg(2+) is required as a cofactor. The cofactor is Mn(2+).

It is found in the cytoplasm. It catalyses the reaction 2 D-alanine + ATP = D-alanyl-D-alanine + ADP + phosphate + H(+). The protein operates within cell wall biogenesis; peptidoglycan biosynthesis. Its function is as follows. Cell wall formation. The polypeptide is D-alanine--D-alanine ligase (Ruegeria pomeroyi (strain ATCC 700808 / DSM 15171 / DSS-3) (Silicibacter pomeroyi)).